The sequence spans 72 residues: ATP synthase subunit c (72 aa).

The next 2 helical transmembrane spans lie at 1 to 21 and 48 to 68; these read MSLGVLAAAIAVGLGALGAGI and MFIGVALVEALPIIGVVFSFI.

Belongs to the ATPase C chain family. In terms of assembly, F-type ATPases have 2 components, F(1) - the catalytic core - and F(0) - the membrane proton channel. F(1) has five subunits: alpha(3), beta(3), gamma(1), delta(1), epsilon(1). F(0) has three main subunits: a(1), b(2) and c(10-14). The alpha and beta chains form an alternating ring which encloses part of the gamma chain. F(1) is attached to F(0) by a central stalk formed by the gamma and epsilon chains, while a peripheral stalk is formed by the delta and b chains.

It is found in the cell membrane. Its function is as follows. F(1)F(0) ATP synthase produces ATP from ADP in the presence of a proton or sodium gradient. F-type ATPases consist of two structural domains, F(1) containing the extramembraneous catalytic core and F(0) containing the membrane proton channel, linked together by a central stalk and a peripheral stalk. During catalysis, ATP synthesis in the catalytic domain of F(1) is coupled via a rotary mechanism of the central stalk subunits to proton translocation. In terms of biological role, key component of the F(0) channel; it plays a direct role in translocation across the membrane. A homomeric c-ring of between 10-14 subunits forms the central stalk rotor element with the F(1) delta and epsilon subunits. The protein is ATP synthase subunit c of Geobacillus kaustophilus (strain HTA426).